The following is a 155-amino-acid chain: UPF0225 protein PC1_1977 (155 aa).

The protein belongs to the UPF0225 family.

The polypeptide is UPF0225 protein PC1_1977 (Pectobacterium carotovorum subsp. carotovorum (strain PC1)).